We begin with the raw amino-acid sequence, 282 residues long: S-formylglutathione hydrolase (282 aa).

An N-acetylalanine modification is found at Ala2. At Lys4 the chain carries N6-succinyllysine. The Charge relay system role is filled by Ser149. Lys200 carries the N6-acetyllysine modification. Residues Asp226 and His260 each act as charge relay system in the active site.

Belongs to the esterase D family. As to quaternary structure, homodimer.

The protein localises to the cytoplasm. The protein resides in the cytoplasmic vesicle. The catalysed reaction is S-formylglutathione + H2O = formate + glutathione + H(+). Its function is as follows. Serine hydrolase involved in the detoxification of formaldehyde. The polypeptide is S-formylglutathione hydrolase (Esd) (Mus musculus (Mouse)).